The sequence spans 543 residues: Telomerase Cajal body protein 1 homolog (543 aa).

The disordered stretch occupies residues G95 to S128. Residues A116 to E127 show a composition bias toward acidic residues. WD repeat units lie at residues P237–S283, D291–D329, and G378–V421.

This sequence belongs to the TCAB1 family.

It localises to the nucleus. The protein localises to the cajal body. In terms of biological role, RNA chaperone that plays a key role in Cajal body formation. Specifically recognizes and binds the Cajal body box (CAB box) present in both small Cajal body RNAs (scaRNAs). Probably acts by mediating localization of scaRNAs to Cajal bodies. The sequence is that of Telomerase Cajal body protein 1 homolog from Drosophila melanogaster (Fruit fly).